The sequence spans 156 residues: MSAVLDTPVAIRRTAMDLLARREHGRVELTRKLRQRGASDELIEPELDRLAEEGLLSEARYLESFIRYRSGSGYGPARIREELCQRGLARADIDQALRESEVNWSERMRDVWQRKFAGQRPQDPRSRAQQTRFLAYRGFPMDMIGRLLSGRDLDDY.

It belongs to the RecX family.

It localises to the cytoplasm. In terms of biological role, modulates RecA activity. This chain is Regulatory protein RecX, found in Pseudomonas putida (strain ATCC 47054 / DSM 6125 / CFBP 8728 / NCIMB 11950 / KT2440).